Reading from the N-terminus, the 251-residue chain is Pyrroloquinoline-quinone synthase (251 aa).

The protein belongs to the PqqC family.

It catalyses the reaction 6-(2-amino-2-carboxyethyl)-7,8-dioxo-1,2,3,4,7,8-hexahydroquinoline-2,4-dicarboxylate + 3 O2 = pyrroloquinoline quinone + 2 H2O2 + 2 H2O + H(+). Its pathway is cofactor biosynthesis; pyrroloquinoline quinone biosynthesis. In terms of biological role, ring cyclization and eight-electron oxidation of 3a-(2-amino-2-carboxyethyl)-4,5-dioxo-4,5,6,7,8,9-hexahydroquinoline-7,9-dicarboxylic-acid to PQQ. This is Pyrroloquinoline-quinone synthase from Klebsiella pneumoniae (strain 342).